The sequence spans 210 residues: Thiamine-phosphate synthase (210 aa).

Residues glutamine 34–lysine 38 and asparagine 66 each bind 4-amino-2-methyl-5-(diphosphooxymethyl)pyrimidine. 2 residues coordinate Mg(2+): aspartate 67 and aspartate 86. A 4-amino-2-methyl-5-(diphosphooxymethyl)pyrimidine-binding site is contributed by serine 105. Threonine 131–serine 133 provides a ligand contact to 2-[(2R,5Z)-2-carboxy-4-methylthiazol-5(2H)-ylidene]ethyl phosphate. Residue lysine 134 coordinates 4-amino-2-methyl-5-(diphosphooxymethyl)pyrimidine. Glycine 162 is a binding site for 2-[(2R,5Z)-2-carboxy-4-methylthiazol-5(2H)-ylidene]ethyl phosphate.

Belongs to the thiamine-phosphate synthase family. Mg(2+) serves as cofactor.

The enzyme catalyses 2-[(2R,5Z)-2-carboxy-4-methylthiazol-5(2H)-ylidene]ethyl phosphate + 4-amino-2-methyl-5-(diphosphooxymethyl)pyrimidine + 2 H(+) = thiamine phosphate + CO2 + diphosphate. The catalysed reaction is 2-(2-carboxy-4-methylthiazol-5-yl)ethyl phosphate + 4-amino-2-methyl-5-(diphosphooxymethyl)pyrimidine + 2 H(+) = thiamine phosphate + CO2 + diphosphate. It carries out the reaction 4-methyl-5-(2-phosphooxyethyl)-thiazole + 4-amino-2-methyl-5-(diphosphooxymethyl)pyrimidine + H(+) = thiamine phosphate + diphosphate. The protein operates within cofactor biosynthesis; thiamine diphosphate biosynthesis; thiamine phosphate from 4-amino-2-methyl-5-diphosphomethylpyrimidine and 4-methyl-5-(2-phosphoethyl)-thiazole: step 1/1. Its function is as follows. Condenses 4-methyl-5-(beta-hydroxyethyl)thiazole monophosphate (THZ-P) and 2-methyl-4-amino-5-hydroxymethyl pyrimidine pyrophosphate (HMP-PP) to form thiamine monophosphate (TMP). This Chlorobium limicola (strain DSM 245 / NBRC 103803 / 6330) protein is Thiamine-phosphate synthase.